We begin with the raw amino-acid sequence, 216 residues long: Ribosomal RNA small subunit methyltransferase G (216 aa).

Residues G73, L78, 124–125 (AE), and R139 contribute to the S-adenosyl-L-methionine site.

It belongs to the methyltransferase superfamily. RNA methyltransferase RsmG family.

It is found in the cytoplasm. Its function is as follows. Specifically methylates the N7 position of guanine in position 518 of 16S rRNA. The protein is Ribosomal RNA small subunit methyltransferase G of Paenarthrobacter aurescens (strain TC1).